Here is an 832-residue protein sequence, read N- to C-terminus: Thymine dioxygenase JBP1-A (832 aa).

Residues Met-1–Met-12 show a composition bias toward basic and acidic residues. Positions Met-1–Lys-24 are disordered. Positions Val-80–Ala-282 are thymine dioxygenase. Residues His-207, Asp-209, and His-257 each coordinate Fe cation. Arg-273 lines the 2-oxoglutarate pocket. Positions Leu-409 to Ser-578 are DNA-binding JBP1 domain.

It belongs to the TET family. JBP1 subfamily. In terms of assembly, monomer. Binds to DNA as a monomer. Requires Fe(2+) as cofactor.

The protein localises to the nucleus. It catalyses the reaction thymine + 2-oxoglutarate + O2 = 5-hydroxymethyluracil + succinate + CO2. Dioxygenase that catalyzes the first step of DNA base J (beta-d-glucosyl-HOMedU) biosynthesis by converting thymine to 5-hydroxymethyluracil (HOMedU). DNA base J is a hypermodified thymidine residue found in the genome of kinetoplastid parasites, which is localized primarily to repetitive DNA, namely the telomeres, and is implicated in the regulation of antigenic variation. Also specifically binds to base J-containing DNA (J-DNA). Involved in propagation and maintenance of DNA base J synthesis initiated by JBP2 by specifically binding already synthesized DNA base J and propagating J synthesis. Thymine dioxygenase activity and J-DNA-binding are independent functions. The sequence is that of Thymine dioxygenase JBP1-A (JBP1A) from Trypanosoma cruzi (strain CL Brener).